Reading from the N-terminus, the 312-residue chain is DNA-directed RNA polymerase subunit alpha (312 aa).

An alpha N-terminal domain (alpha-NTD) region spans residues 1–225; that stretch reads MIEFEKPNIT…VEHFKVFESA (225 aa). The segment at 243–312 is alpha C-terminal domain (alpha-CTD); the sequence is KEKKLEMTIE…DLGLSLRQED (70 aa).

This sequence belongs to the RNA polymerase alpha chain family. As to quaternary structure, homodimer. The RNAP catalytic core consists of 2 alpha, 1 beta, 1 beta' and 1 omega subunit. When a sigma factor is associated with the core the holoenzyme is formed, which can initiate transcription.

It carries out the reaction RNA(n) + a ribonucleoside 5'-triphosphate = RNA(n+1) + diphosphate. Functionally, DNA-dependent RNA polymerase catalyzes the transcription of DNA into RNA using the four ribonucleoside triphosphates as substrates. The sequence is that of DNA-directed RNA polymerase subunit alpha from Lactobacillus helveticus (strain DPC 4571).